A 146-amino-acid polypeptide reads, in one-letter code: Hemoglobin subunit beta-2 (146 aa).

The Globin domain occupies 2–146 (HWSAEEKQLI…VAHALARRYH (145 aa)). Heme b is bound by residues His63 and His92.

It belongs to the globin family. Heterotetramer of two alpha chains and two beta chains. As to expression, red blood cells.

Its function is as follows. Involved in oxygen transport from the lung to the various peripheral tissues. The chain is Hemoglobin subunit beta-2 (HBB2) from Naja naja (Indian cobra).